A 605-amino-acid chain; its full sequence is Elongation factor 4 (605 aa).

The region spanning 11–193 is the tr-type G domain; that stretch reads EKIRNFSIIA…QIVEKVPAPT (183 aa). GTP is bound by residues 23–28 and 140–143; these read DHGKST and NKID.

This sequence belongs to the TRAFAC class translation factor GTPase superfamily. Classic translation factor GTPase family. LepA subfamily.

It localises to the cell membrane. It catalyses the reaction GTP + H2O = GDP + phosphate + H(+). Required for accurate and efficient protein synthesis under certain stress conditions. May act as a fidelity factor of the translation reaction, by catalyzing a one-codon backward translocation of tRNAs on improperly translocated ribosomes. Back-translocation proceeds from a post-translocation (POST) complex to a pre-translocation (PRE) complex, thus giving elongation factor G a second chance to translocate the tRNAs correctly. Binds to ribosomes in a GTP-dependent manner. This is Elongation factor 4 from Streptococcus pyogenes serotype M4 (strain MGAS10750).